The following is a 227-amino-acid chain: Phosphoribosylaminoimidazole-succinocarboxamide synthase (227 aa).

This sequence belongs to the SAICAR synthetase family.

The enzyme catalyses 5-amino-1-(5-phospho-D-ribosyl)imidazole-4-carboxylate + L-aspartate + ATP = (2S)-2-[5-amino-1-(5-phospho-beta-D-ribosyl)imidazole-4-carboxamido]succinate + ADP + phosphate + 2 H(+). It participates in purine metabolism; IMP biosynthesis via de novo pathway; 5-amino-1-(5-phospho-D-ribosyl)imidazole-4-carboxamide from 5-amino-1-(5-phospho-D-ribosyl)imidazole-4-carboxylate: step 1/2. This Clostridium tetani (strain Massachusetts / E88) protein is Phosphoribosylaminoimidazole-succinocarboxamide synthase.